Here is a 291-residue protein sequence, read N- to C-terminus: Protease HtpX homolog (291 aa).

A run of 2 helical transmembrane segments spans residues 4–24 and 38–58; these read VFLF…SARL and MGML…ISLL. His144 contacts Zn(2+). Glu145 is an active-site residue. Zn(2+) is bound at residue His148. 2 helical membrane-spanning segments follow: residues 159 to 179 and 199 to 219; these read LIQG…AYAL and ISSI…VMYF. Residue Glu224 coordinates Zn(2+).

It belongs to the peptidase M48B family. It depends on Zn(2+) as a cofactor.

The protein localises to the cell inner membrane. The protein is Protease HtpX homolog of Chlorobium phaeovibrioides (strain DSM 265 / 1930) (Prosthecochloris vibrioformis (strain DSM 265)).